Reading from the N-terminus, the 1431-residue chain is Collagen alpha-1(XVII) chain (1431 aa).

Residues 1-468 are Cytoplasmic-facing; it reads MDVTKKNKRD…AWCPCGSCCS (468 aa). The tract at residues 1 to 569 is nonhelical region (NC16); it reads MDVTKKNKRD…MTEQENGNLR (569 aa). 4 disordered regions span residues 25 to 155, 167 to 188, 304 to 324, and 422 to 449; these read TRLT…PSTR, KGSRSASASPTRNTSSTLPIPK, TAYGVKKNVPQPPTVTSTGVS, and SVENHNYDRGGGSGGGARGGGGSGGGGG. The span at 60 to 74 shows a compositional bias: low complexity; the sequence is GSSGYINSSGSIRGN. Polar residues-rich tracts occupy residues 75–96, 111–120, and 170–184; these read ASTSSYRRAHSPASTLPNSPGS, EGSSSGNSSP, and RSASASPTRNTSSTL. The necessary for interaction with DST and for the recruitment of DST to hemidesmosome stretch occupies residues 146–231; the sequence is RLQSASPSTR…WSSTLPAGSS (86 aa). Gly residues predominate over residues 430-449; sequence RGGGSGGGARGGGGSGGGGG. A helical; Signal-anchor for type II membrane protein membrane pass occupies residues 469 to 489; that stretch reads WWKWLLGLLLTWLLLLGLLFG. Residues 490 to 1431 are Extracellular-facing; sequence LIALAEEVRK…RRRRSIAIKP (942 aa). Serine 547 is modified (phosphoserine; by CK2). 4 disordered regions span residues 564–869, 884–996, 1158–1178, and 1208–1249; these read ENGN…SFIS, DLRG…SSSG, DIIGPPGPPGPPGPRGPPGVS, and FIIG…SSSV. Positions 570–1417 are triple-helical region; that stretch reads GNPGPKGDMG…KGDKGDKGDQ (848 aa). Composition is skewed to low complexity over residues 657 to 673, 738 to 751, and 778 to 799; these read PRGLPGVPGSVGPRGPN, EPGAKGAMGPAGPD, and PGKPGVTGPQGPQGLPGSPGRP. Pro residues-rich tracts occupy residues 823-844, 889-911, 937-946, 979-989, 1162-1174, and 1212-1221; these read PGPPGPPGAMGPPGPSGTPGPA, LGPPGPRGPPGPSIPGPPGPRGP, PPGPPGPPGP, PPGPPGPPGPP, PPGPPGPPGPRGP, and PPGPPGPQGP. Residue asparagine 1230 is glycosylated (N-linked (GlcNAc...) asparagine). Residues 1232–1249 are compositionally biased toward polar residues; sequence SWGSSSSARRGTAYSSSV. An N-linked (GlcNAc...) asparagine glycan is attached at asparagine 1356. The segment at 1366 to 1431 is disordered; sequence RTHGAIPGPP…RRRRSIAIKP (66 aa). Over residues 1407–1416 the composition is skewed to basic and acidic residues; the sequence is QKGDKGDKGD. Residues 1418–1431 form a nonhelical region (NC1) region; that stretch reads VYTGRRRRSIAIKP. Residues 1421 to 1431 are compositionally biased toward basic residues; it reads GRRRRSIAIKP.

Homotrimers of alpha 1(XVII)chains. Interacts (via cytoplasmic region) with ITGB4 (via cytoplasmic region). Interacts (via cytoplasmic region) with DST (via N-terminus). Interacts (via N-terminus) with PLEC. Interacts (via cytoplasmic region) with DSP. Post-translationally, the intracellular/endo domain is disulfide-linked. In terms of processing, prolines at the third position of the tripeptide repeating unit (G-X-Y) are hydroxylated in some or all of the chains. The ectodomain is shedded from the surface of keratinocytes resulting in a 120-kDa soluble form, also named as 120 kDa linear IgA disease antigen homolog. The shedding is mediated by membrane-bound metalloproteases. This cleavage is inhibited by phosphorylation at Ser-547.

It is found in the cell junction. The protein resides in the hemidesmosome. The protein localises to the membrane. It localises to the secreted. Its subcellular location is the extracellular space. It is found in the extracellular matrix. The protein resides in the basement membrane. Its function is as follows. May play a role in the integrity of hemidesmosome and the attachment of basal keratinocytes to the underlying basement membrane. The 120 kDa linear IgA disease antigen homolog is an anchoring filament component involved in dermal-epidermal cohesion. In Mesocricetus auratus (Golden hamster), this protein is Collagen alpha-1(XVII) chain (COL17A1).